Here is a 124-residue protein sequence, read N- to C-terminus: Large ribosomal subunit protein bL12 (124 aa).

This sequence belongs to the bacterial ribosomal protein bL12 family. Homodimer. Part of the ribosomal stalk of the 50S ribosomal subunit. Forms a multimeric L10(L12)X complex, where L10 forms an elongated spine to which 2 to 4 L12 dimers bind in a sequential fashion. Binds GTP-bound translation factors.

Its function is as follows. Forms part of the ribosomal stalk which helps the ribosome interact with GTP-bound translation factors. Is thus essential for accurate translation. This is Large ribosomal subunit protein bL12 from Pelodictyon phaeoclathratiforme (strain DSM 5477 / BU-1).